The chain runs to 319 residues: 4-diphosphocytidyl-2-C-methyl-D-erythritol kinase (319 aa).

Residue lysine 21 is part of the active site. An ATP-binding site is contributed by 106–116 (PIGAGLAGGSS). Aspartate 148 is a catalytic residue.

The protein belongs to the GHMP kinase family. IspE subfamily.

The catalysed reaction is 4-CDP-2-C-methyl-D-erythritol + ATP = 4-CDP-2-C-methyl-D-erythritol 2-phosphate + ADP + H(+). The protein operates within isoprenoid biosynthesis; isopentenyl diphosphate biosynthesis via DXP pathway; isopentenyl diphosphate from 1-deoxy-D-xylulose 5-phosphate: step 3/6. Catalyzes the phosphorylation of the position 2 hydroxy group of 4-diphosphocytidyl-2C-methyl-D-erythritol. The chain is 4-diphosphocytidyl-2-C-methyl-D-erythritol kinase from Prochlorococcus marinus (strain MIT 9313).